Reading from the N-terminus, the 571-residue chain is Phosphoenolpyruvate-protein phosphotransferase (571 aa).

The Tele-phosphohistidine intermediate role is filled by His203. Phosphoenolpyruvate-binding residues include Arg306 and Arg342. Mg(2+) contacts are provided by Glu429 and Asp453. Phosphoenolpyruvate-binding positions include 452–453 (ND) and Arg463. Residue Cys500 is the Proton donor of the active site.

Belongs to the PEP-utilizing enzyme family. As to quaternary structure, homodimer. Mg(2+) is required as a cofactor.

The protein resides in the cytoplasm. It carries out the reaction L-histidyl-[protein] + phosphoenolpyruvate = N(pros)-phospho-L-histidyl-[protein] + pyruvate. In terms of biological role, general (non sugar-specific) component of the phosphoenolpyruvate-dependent sugar phosphotransferase system (sugar PTS). This major carbohydrate active-transport system catalyzes the phosphorylation of incoming sugar substrates concomitantly with their translocation across the cell membrane. Enzyme I transfers the phosphoryl group from phosphoenolpyruvate (PEP) to the phosphoryl carrier protein (HPr). This is Phosphoenolpyruvate-protein phosphotransferase (ptsI) from Chlamydia pneumoniae (Chlamydophila pneumoniae).